We begin with the raw amino-acid sequence, 597 residues long: Protein GRISEA (597 aa).

A DNA-binding region (copper-fist) is located at residues M1–L41. 4 residues coordinate Zn(2+): C11, C14, C23, and H25. Disordered regions lie at residues P70–R115, A233–G352, S407–N428, and S467–L541. Residues S92 to T103 show a composition bias toward polar residues. Residues K104–R115 are compositionally biased toward low complexity. Positions G269–K281 are enriched in gly residues. Residues Q287–Q314 show a composition bias toward pro residues. The segment covering N469–S495 has biased composition (low complexity). The span at A521 to A530 shows a compositional bias: polar residues.

The protein localises to the nucleus. In terms of biological role, copper-sensing transcription factor that regulates copper uptake by transactivation of Ctr3, a high affinity copper permease. Binds to the palindromic UAS sequence 5'-TGTTGCTCANNNNAGAGCAACT-3'. Also transactivates Sod2, a mitochondrial manganese superoxide dismutase through the palindromic UAS sequence 5'-GTTTGCTCA-3' with 352 bp separating the two inverted repeats. Loss of function indirectly leads to rearrangement of mitochondrial DNA associated with senescence in wild-type strains. This is Protein GRISEA from Podospora anserina (Pleurage anserina).